Reading from the N-terminus, the 447-residue chain is uncharacterized protein (447 aa).

This sequence to E.coli plasmid IncP-alpha RP4 protein TraN.

This is an uncharacterized protein from Haemophilus influenzae (strain ATCC 51907 / DSM 11121 / KW20 / Rd).